Here is a 161-residue protein sequence, read N- to C-terminus: Cysteine dioxygenase (161 aa).

Fe cation-binding residues include histidine 75, histidine 77, and histidine 125.

This sequence belongs to the cysteine dioxygenase family. Fe cation serves as cofactor.

It catalyses the reaction L-cysteine + O2 = 3-sulfino-L-alanine + H(+). The protein is Cysteine dioxygenase (cdoA) of Bacillus subtilis (strain 168).